Here is a 72-residue protein sequence, read N- to C-terminus: ATP synthase subunit c (72 aa).

The next 2 membrane-spanning stretches (helical) occupy residues 1-21 (MSLG…GAGI) and 48-68 (MFIG…FSFI).

Belongs to the ATPase C chain family. F-type ATPases have 2 components, F(1) - the catalytic core - and F(0) - the membrane proton channel. F(1) has five subunits: alpha(3), beta(3), gamma(1), delta(1), epsilon(1). F(0) has three main subunits: a(1), b(2) and c(10-14). The alpha and beta chains form an alternating ring which encloses part of the gamma chain. F(1) is attached to F(0) by a central stalk formed by the gamma and epsilon chains, while a peripheral stalk is formed by the delta and b chains.

Its subcellular location is the cell membrane. Functionally, f(1)F(0) ATP synthase produces ATP from ADP in the presence of a proton or sodium gradient. F-type ATPases consist of two structural domains, F(1) containing the extramembraneous catalytic core and F(0) containing the membrane proton channel, linked together by a central stalk and a peripheral stalk. During catalysis, ATP synthesis in the catalytic domain of F(1) is coupled via a rotary mechanism of the central stalk subunits to proton translocation. Its function is as follows. Key component of the F(0) channel; it plays a direct role in translocation across the membrane. A homomeric c-ring of between 10-14 subunits forms the central stalk rotor element with the F(1) delta and epsilon subunits. The sequence is that of ATP synthase subunit c from Geobacillus stearothermophilus (Bacillus stearothermophilus).